The sequence spans 224 residues: Glycerol-3-phosphate acyltransferase (224 aa).

The next 6 membrane-spanning stretches (helical) occupy residues 3-23 (IFLS…IGSL), 54-74 (VFGY…VVFA), 90-112 (LYFY…PIYF), 127-147 (LISI…LLLF), 152-172 (VSLS…IPWM), and 183-203 (GFGQ…LIFW).

Belongs to the PlsY family. Probably interacts with PlsX.

Its subcellular location is the cell membrane. The catalysed reaction is an acyl phosphate + sn-glycerol 3-phosphate = a 1-acyl-sn-glycero-3-phosphate + phosphate. Its pathway is lipid metabolism; phospholipid metabolism. Its function is as follows. Catalyzes the transfer of an acyl group from acyl-phosphate (acyl-PO(4)) to glycerol-3-phosphate (G3P) to form lysophosphatidic acid (LPA). This enzyme utilizes acyl-phosphate as fatty acyl donor, but not acyl-CoA or acyl-ACP. This is Glycerol-3-phosphate acyltransferase from Mycoplasmopsis synoviae (strain 53) (Mycoplasma synoviae).